The sequence spans 369 residues: 3-dehydroquinate synthase (369 aa).

NAD(+) contacts are provided by residues 75 to 80, 109 to 113, 133 to 134, Lys-146, Lys-155, and 173 to 176; these read DGEEHK, GVIGD, TT, and TLKT. The Zn(2+) site is built by Glu-188, His-251, and His-268.

Belongs to the sugar phosphate cyclases superfamily. Dehydroquinate synthase family. Requires Co(2+) as cofactor. Zn(2+) is required as a cofactor. NAD(+) serves as cofactor.

It is found in the cytoplasm. It carries out the reaction 7-phospho-2-dehydro-3-deoxy-D-arabino-heptonate = 3-dehydroquinate + phosphate. It functions in the pathway metabolic intermediate biosynthesis; chorismate biosynthesis; chorismate from D-erythrose 4-phosphate and phosphoenolpyruvate: step 2/7. In terms of biological role, catalyzes the conversion of 3-deoxy-D-arabino-heptulosonate 7-phosphate (DAHP) to dehydroquinate (DHQ). In Legionella pneumophila (strain Corby), this protein is 3-dehydroquinate synthase.